The following is a 396-amino-acid chain: Phosphopentomutase (396 aa).

Positions 14, 286, 291, 327, 328, and 339 each coordinate Mn(2+).

This sequence belongs to the phosphopentomutase family. It depends on Mn(2+) as a cofactor.

Its subcellular location is the cytoplasm. It carries out the reaction 2-deoxy-alpha-D-ribose 1-phosphate = 2-deoxy-D-ribose 5-phosphate. The catalysed reaction is alpha-D-ribose 1-phosphate = D-ribose 5-phosphate. It functions in the pathway carbohydrate degradation; 2-deoxy-D-ribose 1-phosphate degradation; D-glyceraldehyde 3-phosphate and acetaldehyde from 2-deoxy-alpha-D-ribose 1-phosphate: step 1/2. Its function is as follows. Isomerase that catalyzes the conversion of deoxy-ribose 1-phosphate (dRib-1-P) and ribose 1-phosphate (Rib-1-P) to deoxy-ribose 5-phosphate (dRib-5-P) and ribose 5-phosphate (Rib-5-P), respectively. The polypeptide is Phosphopentomutase (Staphylococcus epidermidis (strain ATCC 35984 / DSM 28319 / BCRC 17069 / CCUG 31568 / BM 3577 / RP62A)).